Reading from the N-terminus, the 196-residue chain is Ribonuclease HII (196 aa).

In terms of domain architecture, RNase H type-2 spans 9–196 (SLIAGVDEVG…APVKRAIGLK (188 aa)). The a divalent metal cation site is built by D15, E16, and D107.

It belongs to the RNase HII family. It depends on Mn(2+) as a cofactor. Requires Mg(2+) as cofactor.

Its subcellular location is the cytoplasm. It catalyses the reaction Endonucleolytic cleavage to 5'-phosphomonoester.. Endonuclease that specifically degrades the RNA of RNA-DNA hybrids. The sequence is that of Ribonuclease HII from Photorhabdus laumondii subsp. laumondii (strain DSM 15139 / CIP 105565 / TT01) (Photorhabdus luminescens subsp. laumondii).